We begin with the raw amino-acid sequence, 560 residues long: Putative transport protein PBPRA2420 (560 aa).

The next 5 membrane-spanning stretches (helical) occupy residues 5–25 (VASLLHQNDILLLFVVLAVGL), 37–57 (VGNSIGVLLTAILFGNAGFTF), 66–86 (FMLFIFCVGIEAGPNFFGIFF), 91–111 (HYLLLALVVLLSAIAITLAMT), and 161–181 (SLSVGYAMSYLMGLISLIFLA). RCK C-terminal domains follow at residues 203 to 292 (RGIG…FRNG) and 293 to 377 (KEVF…IGFI). Transmembrane regions (helical) follow at residues 386–406 (LLAFCCFFIIGLLIGSITLAF), 409–429 (VAFGLGSAAGLLIAGITLGFL), 452–472 (LMVFMVGIGLSAGSNLFDSFA), 477–497 (MVLVTSLMVSVIPVVLAYLFG), 506–526 (ALLFGAIIGARTCAPAMDMIN), and 539–559 (AGTYAIANVLLTIAGTLIIIM).

This sequence belongs to the AAE transporter (TC 2.A.81) family. YbjL subfamily.

Its subcellular location is the cell membrane. This chain is Putative transport protein PBPRA2420, found in Photobacterium profundum (strain SS9).